The chain runs to 262 residues: Putative carbamate hydrolase RutD (262 aa).

It belongs to the AB hydrolase superfamily. Hydrolase RutD family.

It catalyses the reaction carbamate + 2 H(+) = NH4(+) + CO2. In terms of biological role, involved in pyrimidine catabolism. May facilitate the hydrolysis of carbamate, a reaction that can also occur spontaneously. This is Putative carbamate hydrolase RutD from Rhizobium rhizogenes (strain K84 / ATCC BAA-868) (Agrobacterium radiobacter).